We begin with the raw amino-acid sequence, 196 residues long: Orotate phosphoribosyltransferase (196 aa).

5-phospho-alpha-D-ribose 1-diphosphate is bound by residues Arg102, Lys103, Lys106, His108, and 129 to 137; that span reads EDVVTTGGS. Residues Thr133 and Arg161 each coordinate orotate.

Belongs to the purine/pyrimidine phosphoribosyltransferase family. PyrE subfamily. Homodimer. Requires Mg(2+) as cofactor.

It catalyses the reaction orotidine 5'-phosphate + diphosphate = orotate + 5-phospho-alpha-D-ribose 1-diphosphate. Its pathway is pyrimidine metabolism; UMP biosynthesis via de novo pathway; UMP from orotate: step 1/2. In terms of biological role, catalyzes the transfer of a ribosyl phosphate group from 5-phosphoribose 1-diphosphate to orotate, leading to the formation of orotidine monophosphate (OMP). In Prochlorococcus marinus (strain MIT 9303), this protein is Orotate phosphoribosyltransferase.